Consider the following 1327-residue polypeptide: Vascular endothelial growth factor receptor 1 (1327 aa).

The first 24 residues, 1-24, serve as a signal peptide directing secretion; sequence MPRQLLSGTVLLGAAFLLAGSTSG. Over 25–749 the chain is Extracellular; that stretch reads SKLKVPVLSV…GTVERSNLEL (725 aa). 7 Ig-like C2-type domains span residues 30-121, 120-222, 227-323, 331-417, 424-545, 552-644, and 651-737; these read PVLS…SIVY, VYVF…HRET, DIKL…TTVI, NLKR…LTVT, PQIY…RNVS, PSGF…KDVS, and PALL…AYVT. N-linked (GlcNAc...) asparagine glycans are attached at residues Asn48, Asn73, Asn82, Asn98, and Asn125. Residues Cys51 and Cys105 are joined by a disulfide bond. An intrachain disulfide couples Cys154 to Cys203. An N-linked (GlcNAc...) asparagine glycan is attached at Asn247. Residues Cys248 and Cys307 are joined by a disulfide bond. N-linked (GlcNAc...) asparagine glycans are attached at residues Asn319, Asn383, Asn398, Asn409, Asn413, Asn470, Asn512, Asn543, Asn593, Asn615, and Asn663. Residues Cys450 and Cys531 are joined by a disulfide bond. A disulfide bridge connects residues Cys573 and Cys626. Residues Cys672 and Cys721 are joined by a disulfide bond. A helical transmembrane segment spans residues 750–770; the sequence is ITLTCTCVAATLFWLLLTLFI. Over 771-1327 the chain is Cytoplasmic; sequence RKLKRPYFSE…SVVHYSQPSI (557 aa). The 333-residue stretch at 819–1151 folds into the Protein kinase domain; that stretch reads LKLGKSLGHG…ELVKRLGDLL (333 aa). Residues 825 to 833 and Lys853 each bind ATP; that span reads LGHGAFGKV. The disordered stretch occupies residues 950-971; sequence ASVTSSESFASSGFQEDKSLSD. Residues 951-961 show a composition bias toward low complexity; the sequence is SVTSSESFASS. The Proton acceptor role is filled by Asp1015. Phosphotyrosine; by autocatalysis is present on residues Tyr1046, Tyr1162, Tyr1202, Tyr1231, Tyr1316, and Tyr1322.

This sequence belongs to the protein kinase superfamily. Tyr protein kinase family. CSF-1/PDGF receptor subfamily. As to quaternary structure, interacts with VEGFA, VEGFB and PGF. Monomer in the absence of bound VEGFA, VEGFB or PGF. Homodimer in the presence of bound VEGFA, VEGFB and PGF. Post-translationally, autophosphorylated on tyrosine residues upon ligand binding.

The protein resides in the cell membrane. Its subcellular location is the endosome. It localises to the secreted. It carries out the reaction L-tyrosyl-[protein] + ATP = O-phospho-L-tyrosyl-[protein] + ADP + H(+). Its activity is regulated as follows. Present in an inactive conformation in the absence of bound ligand. Binding of VEGFA, VEGFB or PGF leads to dimerization and activation by autophosphorylation on tyrosine residues. Tyrosine-protein kinase that acts as a cell-surface receptor for VEGFA, VEGFB and PGF, and plays an essential role in the regulation of angiogenesis, cell survival, cell migration, macrophage function, and chemotaxis. Acts as a positive regulator of postnatal retinal hyaloid vessel regression. Has very high affinity for VEGFA and relatively low protein kinase activity; may function as a negative regulator of VEGFA signaling by limiting the amount of free VEGFA and preventing its binding to KDR. Ligand binding leads to the activation of several signaling cascades. Activation of PLCG1 leads to the production of the cellular signaling molecules diacylglycerol and inositol 1,4,5-trisphosphate and the activation of protein kinase C. Mediates phosphorylation of PIK3R1, the regulatory subunit of phosphatidylinositol 3-kinase, leading to activation of phosphatidylinositol kinase and the downstream signaling pathway. Mediates activation of MAPK1/ERK2, MAPK3/ERK1 and the MAP kinase signaling pathway, as well as of the AKT1 signaling pathway. Phosphorylates PLCG1. Promotes phosphorylation of AKT1 and CBL. This is Vascular endothelial growth factor receptor 1 (FLT1) from Gallus gallus (Chicken).